The chain runs to 134 residues: Crustacean hyperglycemic hormones isoform B (134 aa).

The N-terminal stretch at 1-24 is a signal peptide; the sequence is MFACRTLCLVVVMVASLGTSGVGG. At Gln-61 the chain carries Pyrrolidone carboxylic acid. Position 63 is a D-phenylalanine; in form CHH-B-II (Phe-63). 3 disulfide bridges follow: Cys-67–Cys-103, Cys-83–Cys-99, and Cys-86–Cys-112. Val-132 is modified (valine amide).

The protein belongs to the arthropod CHH/MIH/GIH/VIH hormone family. In terms of processing, stereoinversion of L-Phe (form CHH-B-I) to D-Phe (form CHH-B-II). As to expression, produced by the medulla terminalis X-organ in the eyestalks and transported to the sinus gland where they are stored and released. Present also in the ventral nervous system.

The protein resides in the secreted. In terms of biological role, hormone found in the sinus gland of isopods and decapods which controls the blood sugar level. Has a secretagogue action over the amylase released from the midgut gland. May act as a stress hormone and may be involved in the control of molting and reproduction. This is Crustacean hyperglycemic hormones isoform B from Homarus americanus (American lobster).